A 255-amino-acid polypeptide reads, in one-letter code: Putative mediator of RNA polymerase II transcription subunit 30 (255 aa).

The segment covering 58–107 (QSQQLQQPQSIPSSTNNSTNTNTNNSTTTTTTSSTSSTTTPTTTTSTTSP) has biased composition (low complexity). Disordered stretches follow at residues 58–133 (QSQQ…TLNL) and 177–207 (NIDN…IEKQ). Residues 108 to 133 (LNSKDSTATTTTKEQPSSPTLPTLNL) are compositionally biased toward polar residues. Residues 177 to 189 (NIDNDDTIMKDDN) are compositionally biased toward basic and acidic residues. Low complexity predominate over residues 190–201 (NNSSTSAPTTTT).

The protein belongs to the Mediator complex subunit 30 family. Highly divergent. As to quaternary structure, component of the Mediator complex.

Its subcellular location is the nucleus. In terms of biological role, component of the Mediator complex, a coactivator involved in the regulated transcription of nearly all RNA polymerase II-dependent genes. Mediator functions as a bridge to convey information from gene-specific regulatory proteins to the basal RNA polymerase II transcription machinery. Mediator is recruited to promoters by direct interactions with regulatory proteins and serves as a scaffold for the assembly of a functional preinitiation complex with RNA polymerase II and the general transcription factors. This is Putative mediator of RNA polymerase II transcription subunit 30 (med30) from Dictyostelium discoideum (Social amoeba).